The following is a 632-amino-acid chain: Chaperone protein HtpG (632 aa).

Residues M1 to R339 form an a; substrate-binding region. Residues E340–R559 are b. The c stretch occupies residues M560–A632.

Belongs to the heat shock protein 90 family. As to quaternary structure, homodimer.

Its subcellular location is the cytoplasm. In terms of biological role, molecular chaperone. Has ATPase activity. This is Chaperone protein HtpG from Burkholderia pseudomallei (strain 668).